Here is a 517-residue protein sequence, read N- to C-terminus: Putative pumilio homolog 21 (517 aa).

Disordered stretches follow at residues 33-57 (NHQEPGESGNTNINSNNNHPNPPLL), 69-94 (KNNQEPGESGNTTINRNKNHPNPPLV), 107-130 (NHQEPGESGTTNINNNNPNPPLLT), and 175-201 (FTPSSLTQPDDSSSRYSGKPFPPPPLS). Low complexity predominate over residues 42–51 (NTNINSNNNH). Over residues 69–84 (KNNQEPGESGNTTINR) the composition is skewed to polar residues. In terms of domain architecture, PUM-HD spans 148 to 502 (ESSNNNYPNL…NTLRVIQEEI (355 aa)). Over residues 177 to 190 (PSSLTQPDDSSSRY) the composition is skewed to polar residues. The Pumilio 1; degenerate repeat unit spans residues 258–293 (TTKRIFLHLATNQYGSQALRILFRRSPSLDHLLFCA). The Pumilio 2 repeat unit spans residues 294–328 (VDTNFFLLMSDKYGRGLIIPAIRAVDKTKKESLYK). A Pumilio 3; degenerate repeat occupies 329 to 363 (LTYEYTLHLARLETGCLALNNVLQEIRGIYRDLIF). 3 Pumilio repeats span residues 364-400 (ECVANNADWLSFDPYGTHVVQNILILQNPVATTAIAE), 401-437 (RLRGSFFRLAMERQGSYVVEKCLKSDFARDQVLEEFR), and 438-473 (GNAKEWVRMTTDKFGNFVVQSALRVMKEKEMRPLLR).

It is found in the cytoplasm. Functionally, sequence-specific RNA-binding protein that regulates translation and mRNA stability by binding the 3'-UTR of target mRNAs. This Arabidopsis thaliana (Mouse-ear cress) protein is Putative pumilio homolog 21 (APUM21).